The sequence spans 147 residues: Transcriptional repressor NrdR (147 aa).

Residues 3–34 fold into a zinc finger; sequence CPYCGNVETTVVETRESDEGDAVRRRRRCSAC. The region spanning 49 to 139 is the ATP-cone domain; that stretch reads PAVVKKNGDR…VYREFEDIDA (91 aa).

Belongs to the NrdR family. Requires Zn(2+) as cofactor.

Its function is as follows. Negatively regulates transcription of bacterial ribonucleotide reductase nrd genes and operons by binding to NrdR-boxes. The polypeptide is Transcriptional repressor NrdR (Leptothrix cholodnii (strain ATCC 51168 / LMG 8142 / SP-6) (Leptothrix discophora (strain SP-6))).